The chain runs to 194 residues: ATP-dependent Clp protease proteolytic subunit 3 (194 aa).

S96 (nucleophile) is an active-site residue. The active site involves H121.

Belongs to the peptidase S14 family. As to quaternary structure, fourteen ClpP subunits assemble into 2 heptameric rings which stack back to back to give a disk-like structure with a central cavity, resembling the structure of eukaryotic proteasomes.

The protein resides in the cytoplasm. It catalyses the reaction Hydrolysis of proteins to small peptides in the presence of ATP and magnesium. alpha-casein is the usual test substrate. In the absence of ATP, only oligopeptides shorter than five residues are hydrolyzed (such as succinyl-Leu-Tyr-|-NHMec, and Leu-Tyr-Leu-|-Tyr-Trp, in which cleavage of the -Tyr-|-Leu- and -Tyr-|-Trp bonds also occurs).. Functionally, cleaves peptides in various proteins in a process that requires ATP hydrolysis. Has a chymotrypsin-like activity. Plays a major role in the degradation of misfolded proteins. The protein is ATP-dependent Clp protease proteolytic subunit 3 of Rhizobium etli (strain ATCC 51251 / DSM 11541 / JCM 21823 / NBRC 15573 / CFN 42).